A 1230-amino-acid chain; its full sequence is Cullin-associated NEDD8-dissociated protein 1 (1230 aa).

Residue A2 is modified to N-acetylalanine. HEAT repeat units follow at residues 2 to 39 (ASASYHISNLLEKMTSSDKDFRFMATNDLMTELQKDSI), 44 to 81 (DSERKVVKMILKLLEDKNGEVQNLAVKCLGPLVSKVKE), 83 to 119 (QVETIVDTLCTNMLSDKEQLRDISSIGLKTVIGELPP), 131 to 165 (CKKITGRLTSAIAKQEDVSVQLEALDIMADMLSRQ), 171 to 208 (NFHPSILTCLLPQLTSPRLAVRKRTIIALGHLVMSCGN), 210 to 247 (VFVDLIEHLLSELSKNDSMSTTRTYIQCIAAISRQAGH), 248 to 282 (RIGEYLEKIIPLVVKFCNVDDDELREYCIQAFESF), 289 to 366 (EVYP…TRHE), 370 to 407 (EFYKTVSPALISRFKEREENVKADVFHAYLSLLKQTRP), 424 to 467 (PLTM…VLPG), 471 to 510 (QHIPVLVPGIIFSLNDKSSSSNLKIDALSCLYVILCNHSP), and 515 to 552 (PHVQALVPPVVACVGDPFYKITSEALLVTQQLVKVIRP). N6-acetyllysine is present on K55. Residues 315–344 (DEDEDENAMDADGGDDDDQGSDDEYSDDDD) are disordered. S335 carries the phosphoserine modification. Phosphoserine is present on S558. 15 HEAT repeats span residues 563 to 602 (PYIKDLFTCTIKRLKAADIDQEVKERAISCMGQIICNLGD), 606 to 643 (PDLSNTLQIFLERLKNEITRLTTVKALTLIAGSPLKID), 646 to 683 (PVLGEGVPILASFLRKNQRALKLGTLSALDILIKNYSD), 688 to 725 (AMIDAVLDELPPLISESDMHVSQMAISFLTTLAKVYPS), 729 to 768 (KISGSILNELIGLVRSPLLQGGALSAMLDFFQALVVTGTN), 770 to 808 (LGYMDLLRMLTGPVYSQSTALTHKQSYYSIAKCVAALTR), 809 to 845 (ACPKEGPAVVGQFIQDVKNSRSTDSIRLLALLSLGEV), 852 to 889 (SGQLELKSVILEAFSSPSEEVKSAASYALGSISVGNLP), 890 to 927 (EYLPFVLQEITSQPKRQYLLLHSLKEIISSASVVGLKP), 928 to 960 (YVENIWALLLKHCECAEEGTRNVVAECLGKLTL), 961 to 998 (IDPETLLPRLKGYLISGSSYARSSVVTAVKFTISDHPQ), 1002 to 1039 (PLLKNCIGDFLKTLEDPDLNVRRVALVTFNSAAHNKPS), 1043 to 1097 (DLLD…DSCL), 1099 to 1133 (RLDIFEFLNHVEDGLKDHYDIKMLTFLMLVRLSTL), and 1140 to 1189 (QRLD…IPEA). The residue at position 971 (K971) is an N6-acetyllysine.

The protein belongs to the CAND family. As to quaternary structure, interacts with TBP. Part of a complex that contains CUL1 and RBX1. Interacts with unneddylated cullins: interacts with CUL1, CUL2, CUL3, CUL4A, CUL4B and CUL5. Does not bind neddylated CUL1. Interaction with cullins is abolished in presence of COMMD1, which antagonizes with CAND1 for interacting with cullins. Interacts with ERCC6. Interacts with DCUN1D1, DCUN1D2, DCUN1D3, DCUN1D4 and DCUN1D5; these interactions are bridged by cullins and strongly inhibits the neddylation of cullins. Detected in heart, brain, spleen, liver, skeletal muscle, kidney and testis.

Its subcellular location is the cytoplasm. It is found in the nucleus. In terms of biological role, key assembly factor of SCF (SKP1-CUL1-F-box protein) E3 ubiquitin ligase complexes that promotes the exchange of the substrate-recognition F-box subunit in SCF complexes, thereby playing a key role in the cellular repertoire of SCF complexes. Acts as a F-box protein exchange factor. The exchange activity of CAND1 is coupled with cycles of neddylation conjugation: in the deneddylated state, cullin-binding CAND1 binds CUL1-RBX1, increasing dissociation of the SCF complex and promoting exchange of the F-box protein. Probably plays a similar role in other cullin-RING E3 ubiquitin ligase complexes. May indirectly enhance transcription from various types of promoters. This Rattus norvegicus (Rat) protein is Cullin-associated NEDD8-dissociated protein 1 (Cand1).